The sequence spans 88 residues: Putative regulatory protein Ava_1474 (88 aa).

This sequence belongs to the RemA family.

The protein is Putative regulatory protein Ava_1474 of Trichormus variabilis (strain ATCC 29413 / PCC 7937) (Anabaena variabilis).